The chain runs to 417 residues: Neuropeptide FF receptor 2 (417 aa).

The Extracellular segment spans residues 1 to 45 (MSEKWDSNSSESWNHIWSGNDTQHHWYSDINITYVNYYLHQPQVA). Residues Asn-8, Asn-20, and Asn-31 are each glycosylated (N-linked (GlcNAc...) asparagine). The chain crosses the membrane as a helical span at residues 46-66 (AVFISSYLLIFVLCMVGNTVV). Topologically, residues 67–82 (CFIVIRNRHMHTVTNF) are cytoplasmic. The helical transmembrane segment at 83–103 (FILNLAISDLLVGIFCMPITL) threads the bilayer. Residues 104–119 (LDNIIAGWPFGSSMCK) are Extracellular-facing. A disulfide bond links Cys-118 and Cys-206. A helical transmembrane segment spans residues 120–140 (ISGLVQGISVAASVFTLVAIA). Residues 141–160 (VDRFRCVVYPFKPKLTVKTA) are Cytoplasmic-facing. A helical membrane pass occupies residues 161 to 181 (FVTIVIIWGLAIAIMTPSAIM). Residues 182–217 (LHVQEEKYYRVRLSSHNKTSTVYWCREDWPRHEMRR) are Extracellular-facing. An N-linked (GlcNAc...) asparagine glycan is attached at Asn-198. Residues 218–238 (IYTTVLFATIYLAPLSLIVIM) traverse the membrane as a helical segment. Over 239 to 274 (YARIGASLFKTAAHCTGKQRPVQWHVSKKKQKVIKM) the chain is Cytoplasmic. Residues 275 to 295 (LLTVALLFILSWLPLWTLMML) traverse the membrane as a helical segment. Residues 296-310 (SDYTDLSPNKLRIIN) lie on the Extracellular side of the membrane. Residues 311–331 (IYIYPFAHWLAFCNSSVNPII) form a helical membrane-spanning segment. Topologically, residues 332–417 (YGFFNENFRN…MGEATNSTVA (86 aa)) are cytoplasmic. The segment at 382-401 (SQNPGGENLGCGKSADNPTQ) is disordered.

Belongs to the G-protein coupled receptor 1 family.

The protein resides in the cell membrane. In terms of biological role, receptor for NPAF (A-18-F-amide) and NPFF (F-8-F-amide) neuropeptides, also known as morphine-modulating peptides. Can also be activated by a variety of naturally occurring or synthetic FMRF-amide like ligands. This receptor mediates its action by association with G proteins that activate a phosphatidylinositol-calcium second messenger system. This Mus musculus (Mouse) protein is Neuropeptide FF receptor 2 (Npffr2).